We begin with the raw amino-acid sequence, 210 residues long: S-norcoclaurine synthase (210 aa).

The N-terminal stretch at 1–19 is a signal peptide; the sequence is MMKMEVVFVFLMLLGTINC. 108-110 provides a ligand contact to dopamine; it reads YKE. Lys122 acts as the Proton donor in catalysis. Asp141 contacts (4-hydroxyphenyl)acetaldehyde.

The protein belongs to the BetVI family. As to quaternary structure, concentration-dependent dimerization, but mainly monomeric at concentrations around 10 uM. Expressed most abundantly in the rhizomes and to a lesser extent in petioles, roots, leaves and flower buds.

It carries out the reaction (4-hydroxyphenyl)acetaldehyde + dopamine = (S)-norcoclaurine + H2O. Involved in the biosynthesis of the common precursor of all benzylisoquinoline alkaloids such as morphine, sanguinarine, codeine or berberine. Condenses dopamine and 4-hydroxyphenylacetaldehyde. The protein is S-norcoclaurine synthase of Thalictrum flavum subsp. glaucum (Yellow meadow rue).